The chain runs to 311 residues: Protease HtpX homolog 1 (311 aa).

2 helical membrane passes run 12-32 (IIAL…IINF) and 35-55 (FPVI…WLIS). Histidine 137 is a binding site for Zn(2+). Glutamate 138 is an active-site residue. Histidine 141 contacts Zn(2+). 2 helical membrane passes run 159–179 (ILGF…IFAV) and 184–204 (ILVG…TFFL). A Zn(2+)-binding site is contributed by glutamate 216.

The protein belongs to the peptidase M48B family. The cofactor is Zn(2+).

Its subcellular location is the cell membrane. In Sulfurisphaera tokodaii (strain DSM 16993 / JCM 10545 / NBRC 100140 / 7) (Sulfolobus tokodaii), this protein is Protease HtpX homolog 1.